The primary structure comprises 160 residues: Small ribosomal subunit protein uS7 (160 aa).

The protein belongs to the universal ribosomal protein uS7 family. Part of the 30S ribosomal subunit. Contacts proteins S9 and S11.

One of the primary rRNA binding proteins, it binds directly to 16S rRNA where it nucleates assembly of the head domain of the 30S subunit. Is located at the subunit interface close to the decoding center, probably blocks exit of the E-site tRNA. In Ehrlichia ruminantium (strain Gardel), this protein is Small ribosomal subunit protein uS7.